Consider the following 279-residue polypeptide: Peptide deformylase 1B, chloroplastic (279 aa).

Cys177 and His219 together coordinate Fe cation. Glu220 is an active-site residue. Fe cation is bound at residue His223.

This sequence belongs to the polypeptide deformylase family. Fe(2+) serves as cofactor.

It localises to the plastid. Its subcellular location is the chloroplast. The catalysed reaction is N-terminal N-formyl-L-methionyl-[peptide] + H2O = N-terminal L-methionyl-[peptide] + formate. Functionally, removes the formyl group from the N-terminal Met of newly synthesized proteins. The polypeptide is Peptide deformylase 1B, chloroplastic (PDF1B) (Solanum lycopersicum (Tomato)).